Here is a 470-residue protein sequence, read N- to C-terminus: FAD-dependent monooxygenase nvfK (470 aa).

The first 23 residues, 1–23, serve as a signal peptide directing secretion; that stretch reads MEKAKFKVVIVGGSITGLTLAHC. 3 residues coordinate FAD: Glu-35, Gly-49, and Arg-108. Asn-121 is a glycosylation site (N-linked (GlcNAc...) asparagine). Residue Tyr-216 is part of the active site. 2 residues coordinate FAD: Asp-308 and Ala-321. A helical transmembrane segment spans residues 450-470; it reads ILMSIVLVAPAWVYIFSSLVW.

The protein belongs to the paxM FAD-dependent monooxygenase family. FAD is required as a cofactor.

The protein resides in the membrane. The enzyme catalyses (3R)-3-farnesyl-6-hydroxy-2,3,5-trimethyl-4-oxocyclohexa-1,5-diene-1-carboxylate + 2-oxoglutarate + O2 = (3R)-[(10S)-11-epoxyfarnesyl]-2,3,5-trimethyl-6-oxido-4-oxocyclohexa-1,5-diene-1-carboxylate + succinate + CO2. It functions in the pathway secondary metabolite biosynthesis; terpenoid biosynthesis. In terms of biological role, FAD-dependent monooxygenase; part of the gene cluster that mediates the biosynthesis of novofumigatonin, a heavily oxygenated meroterpenoid containing a unique orthoester moiety. The first step of the pathway is the synthesis of 3,5-dimethylorsellinic acid (DMOA) by the polyketide synthase nvfA via condensation of one acetyl-CoA starter unit with 3 malonyl-CoA units and 2 methylations. DMOA is then converted to farnesyl-DMOA by the farnesyltransferase nvfB. Epoxydation by FAD-dependent monooxygenase nvfK, followed by a protonation-initiated cyclization catalyzed by the terpene cyclase nvfL leads to the production of asnavolin H. The short chain dehydrogenase nvfC then as a 3-OH dehydrogenase of asnovolin H to yield chemesin D. There are two branches to synthesize asnovolin A from chemesin D. In one branch, chemesin D undergoes Baeyer-Villiger oxidation by nvfH, methylation by nvfJ, and enoyl reduction by the nvfM D enoylreductase that reduces the double bond between C-5'and C-6', to form respectively asnovolin I, asnovolin K, and asnovolin A. In the other branch, the methylation precedes the Baeyer-Villiger oxidation and the enoyl reduction to yield asnovolin A via the asnovolin J intermediate. Asnovolin A is further converted to fumigatonoid A by the Fe(II)/2-oxoglutarate-dependent dioxygenase nvfI that catalyzes an endoperoxidation reaction. The alpha/beta hydrolase nvfD then acts as an epimerase that converts fumigatonoid A to its C-5' epimer, which then undergoes spontaneous or nvfD-catalyzed lactonization. The following step utilizes the ketoreductase nvfG to produce fumigatonoid B. The dioxygenase nvfE further converts fumigatonoid B into fumigatonoid C. Finally the Fe(II)/2-oxoglutarate-dependent dioxygenase nvfF catalyzes two rounds of oxidation to transform fumigatonoid C into the end product, novofumigatonin A. The polypeptide is FAD-dependent monooxygenase nvfK (Aspergillus novofumigatus (strain IBT 16806)).